Consider the following 288-residue polypeptide: 4-diphosphocytidyl-2-C-methyl-D-erythritol kinase (288 aa).

K8 is an active-site residue. ATP is bound at residue 90-100; it reads PFGAGLGGGSS. D132 is an active-site residue.

This sequence belongs to the GHMP kinase family. IspE subfamily.

The catalysed reaction is 4-CDP-2-C-methyl-D-erythritol + ATP = 4-CDP-2-C-methyl-D-erythritol 2-phosphate + ADP + H(+). Its pathway is isoprenoid biosynthesis; isopentenyl diphosphate biosynthesis via DXP pathway; isopentenyl diphosphate from 1-deoxy-D-xylulose 5-phosphate: step 3/6. Catalyzes the phosphorylation of the position 2 hydroxy group of 4-diphosphocytidyl-2C-methyl-D-erythritol. This is 4-diphosphocytidyl-2-C-methyl-D-erythritol kinase from Chlorobium chlorochromatii (strain CaD3).